We begin with the raw amino-acid sequence, 1161 residues long: Cingulin (1161 aa).

The head stretch occupies residues 1-403 (MSSLSADRKP…SLIHERFCGV (403 aa)). Disordered stretches follow at residues 29–53 (GGFPDKSRLANGVGGVSNGTSSPSK), 79–309 (SYGV…LGRD), 649–678 (QSELEKQKAETLKKQEELKSATRASEKRET), 699–721 (SKAIEKTQQPLVSDQTKDPESNL), 739–773 (RLHSSVPDSSSSDALEEENRSLKTQLEESRRAASR), and 1123–1161 (QSRRSTLGSTLSSDEEDNYSDTKSITSILTDSPLQTTSC). A ZIM motif is present at residues 51 to 65 (PSKYGVAVRVQGISG). Polar residues-rich tracts occupy residues 84–104 (LKTQPQIQSAPPVVSQTSPYN) and 117–129 (PQGSYNPTDQPSS). The span at 189 to 203 (NGIGSSLNGTGLNGS) shows a compositional bias: low complexity. The segment covering 273–305 (EASSTSPTINPYAPNTSATVPKLNSTKPSSTGS) has biased composition (polar residues). Residues 413–1128 (SNMKTELEQA…RKIQQSRRST (716 aa)) are a coiled coil. Over residues 742 to 751 (SSVPDSSSSD) the composition is skewed to low complexity. Basic and acidic residues predominate over residues 755 to 773 (EENRSLKTQLEESRRAASR). Residues 1122–1161 (QQSRRSTLGSTLSSDEEDNYSDTKSITSILTDSPLQTTSC) form a tail region. Residues 1124-1134 (SRRSTLGSTLS) show a composition bias toward low complexity. The span at 1143–1161 (DTKSITSILTDSPLQTTSC) shows a compositional bias: polar residues.

This sequence belongs to the cingulin family. Homodimer.

The protein resides in the cell junction. It is found in the tight junction. In terms of biological role, probably plays a role in the formation and regulation of the tight junction (TJ) paracellular permeability barrier. Note=Localizes to the apical junction complex composed of tight and adherens junctions. This is Cingulin from Danio rerio (Zebrafish).